Here is a 57-residue protein sequence, read N- to C-terminus: UPF0337 protein SAV_1088 (57 aa).

Composition is skewed to basic and acidic residues over residues 1-15 (MAGD…EQAK) and 36-57 (QAEK…VFKH). The disordered stretch occupies residues 1–57 (MAGDQKAKAKMEQAKGKAKAAAGRAVGNERMAAEGQAEKSKGDARQAKEKTKDVFKH).

The protein belongs to the UPF0337 (CsbD) family.

This chain is UPF0337 protein SAV_1088, found in Streptomyces avermitilis (strain ATCC 31267 / DSM 46492 / JCM 5070 / NBRC 14893 / NCIMB 12804 / NRRL 8165 / MA-4680).